The following is a 261-amino-acid chain: Class II histocompatibility antigen, M alpha chain (261 aa).

An N-terminal signal peptide occupies residues 1-26 (MEHEQKSGAVLLRLLRLLWLLPHSWA). The segment at 27-124 (VLEASTPVLW…KLEGQIPVSR (98 aa)) is alpha-1. At 27–231 (VLEASTPVLW…ALPSDLLENA (205 aa)) the chain is on the lumenal side. An N-linked (GlcNAc...) asparagine glycan is attached at Asn41. 2 cysteine pairs are disulfide-bonded: Cys50-Cys105 and Cys147-Cys202. In terms of domain architecture, Ig-like C1-type spans 114–215 (PKLEGQIPVS…HEIDRYTAIA (102 aa)). Residues 125 to 217 (GLSVAEVFTL…IDRYTAIAYW (93 aa)) are alpha-2. The tract at residues 218-231 (VPQNALPSDLLENA) is connecting peptide. The chain crosses the membrane as a helical span at residues 232-252 (LCGVAFALGVLGTIIGIVFFL). The Cytoplasmic portion of the chain corresponds to 253–261 (CSQRPCSGD).

This sequence belongs to the MHC class II family. Heterodimer of an alpha chain (DMA) and a beta chain (DMB). Interacts with MHCII; this interaction mediates rapid selection of high-affinity peptides.

The protein resides in the late endosome membrane. It is found in the lysosome membrane. Functionally, plays a critical role in catalyzing the release of class II-associated invariant chain peptide (CLIP) from newly synthesized MHC class II molecules and freeing the peptide binding site for acquisition of antigenic peptides. This Mus musculus (Mouse) protein is Class II histocompatibility antigen, M alpha chain (H2-DMa).